The sequence spans 245 residues: tRNA pseudouridine synthase A 2 (245 aa).

Residue D53 is the Nucleophile of the active site. Y111 lines the substrate pocket.

It belongs to the tRNA pseudouridine synthase TruA family. As to quaternary structure, homodimer.

It catalyses the reaction uridine(38/39/40) in tRNA = pseudouridine(38/39/40) in tRNA. Its function is as follows. Formation of pseudouridine at positions 38, 39 and 40 in the anticodon stem and loop of transfer RNAs. This is tRNA pseudouridine synthase A 2 from Bacillus anthracis.